Reading from the N-terminus, the 238-residue chain is Endothelial protein C receptor (238 aa).

Residues 1–17 form the signal peptide; that stretch reads MLTTLLPILLLSGWAFC. Residues 18 to 210 lie on the Extracellular side of the membrane; that stretch reads SQDASDGLQR…GSQTSRSYTS (193 aa). N-linked (GlcNAc...) asparagine glycans are attached at residues Asn47, Asn64, Asn136, and Asn172. An intrachain disulfide couples Cys118 to Cys186. The chain crosses the membrane as a helical span at residues 211-231; it reads LVLGVLVGSFIIAGVAVGIFL. Residues 232 to 238 lie on the Cytoplasmic side of the membrane; that stretch reads CTGGRRC.

In terms of processing, N-glycosylated. Post-translationally, a soluble form exists; probably released by a metalloprotease. Seems to have the same activity as the membrane-bound form. Expressed strongly in the endothelial cells of arteries and veins in heart and lung, less intensely in capillaries in the lung and skin, and not at all in the endothelium of small vessels of the liver and kidney.

It is found in the membrane. Functionally, binds activated protein C. Enhances protein C activation by the thrombin-thrombomodulin complex; plays a role in the protein C pathway controlling blood coagulation. This chain is Endothelial protein C receptor (PROCR), found in Homo sapiens (Human).